The chain runs to 1116 residues: Surface layer protein (1116 aa).

An N-terminal signal peptide occupies residues 1 to 53 (MQDSGFKKKDRSTNIPQEQFVYTRGGEHKVMKKVVNSVLASALAITVAPMAFA). 3 SLH domains span residues 54-117 (AEDT…KLAQ), 118-181 (FNTT…RGVW), and 182-231 (PNSM…YGTD).

Its subcellular location is the secreted. The protein localises to the cell wall. It localises to the S-layer. This chain is Surface layer protein, found in Brevibacillus choshinensis.